Reading from the N-terminus, the 444-residue chain is Exodeoxyribonuclease 7 large subunit (444 aa).

This sequence belongs to the XseA family. In terms of assembly, heterooligomer composed of large and small subunits.

The protein resides in the cytoplasm. The enzyme catalyses Exonucleolytic cleavage in either 5'- to 3'- or 3'- to 5'-direction to yield nucleoside 5'-phosphates.. Functionally, bidirectionally degrades single-stranded DNA into large acid-insoluble oligonucleotides, which are then degraded further into small acid-soluble oligonucleotides. In Aliivibrio salmonicida (strain LFI1238) (Vibrio salmonicida (strain LFI1238)), this protein is Exodeoxyribonuclease 7 large subunit.